The primary structure comprises 493 residues: Galactose-1-phosphate uridylyltransferase (493 aa).

This sequence belongs to the galactose-1-phosphate uridylyltransferase type 2 family.

The protein localises to the cytoplasm. It catalyses the reaction alpha-D-galactose 1-phosphate + UDP-alpha-D-glucose = alpha-D-glucose 1-phosphate + UDP-alpha-D-galactose. It functions in the pathway carbohydrate metabolism; galactose metabolism. The sequence is that of Galactose-1-phosphate uridylyltransferase from Streptococcus pneumoniae (strain CGSP14).